The following is a 394-amino-acid chain: Elongation factor Tu (394 aa).

Residues 10–205 (KPHVNIGTIG…VDTWIPLPPR (196 aa)) form the tr-type G domain. Residues 19-26 (GHVDHGKT) form a G1 region. Position 19-26 (19-26 (GHVDHGKT)) interacts with GTP. Thr26 contacts Mg(2+). Residues 60–64 (GITIN) are G2. The segment at 81–84 (DCPG) is G3. GTP contacts are provided by residues 81–85 (DCPGH) and 136–139 (NKCD). The G4 stretch occupies residues 136-139 (NKCD). The interval 174 to 176 (SAL) is G5.

It belongs to the TRAFAC class translation factor GTPase superfamily. Classic translation factor GTPase family. EF-Tu/EF-1A subfamily. Monomer.

It is found in the cytoplasm. The enzyme catalyses GTP + H2O = GDP + phosphate + H(+). In terms of biological role, GTP hydrolase that promotes the GTP-dependent binding of aminoacyl-tRNA to the A-site of ribosomes during protein biosynthesis. This chain is Elongation factor Tu, found in Bacteroides fragilis (strain ATCC 25285 / DSM 2151 / CCUG 4856 / JCM 11019 / LMG 10263 / NCTC 9343 / Onslow / VPI 2553 / EN-2).